Reading from the N-terminus, the 423-residue chain is MKDIITRHKSGEHIGICSVCSAHPLVIEAALRFDLSTNNKVLIEATSNQVNQFGGYTGMQPADFRDFVYNIARTVGFPAERIILGGDHLGPNCWQDEPAAVAMEKSIDLIKAYVAAGFSKIHLDASMSCADDPVPLDPGVVAERAARLCQAAEETASDEQKRHLTYVIGTEVPVPGGEASTIGSVHVTRAQDAAATLETHEAAFRKLGLDAALERVIAIVVQPGVEFDHTQIIHYQPQEAKALSAWIESTPMVYEAHSTDYQTRQAYRALVRDHFAILKVGPALTFALREAIFALAQMENELIAPESRSRVMEVIDEVMLNEPGYWKKYYRPTWSQAMVDIHFSLSDRIRYYWPHPRIRQSVEKLIANLTDAKLPLGLISQYMPVQFERLSLNELNAEPHALILDKIQDVLRAYRYGCSSETA.

It belongs to the GatZ/KbaZ family. GatZ subfamily. As to quaternary structure, forms a complex with GatY.

It functions in the pathway carbohydrate metabolism; D-tagatose 6-phosphate degradation; D-glyceraldehyde 3-phosphate and glycerone phosphate from D-tagatose 6-phosphate: step 2/2. Component of the tagatose-1,6-bisphosphate aldolase GatYZ that is required for full activity and stability of the Y subunit. Could have a chaperone-like function for the proper and stable folding of GatY. When expressed alone, GatZ does not show any aldolase activity. Is involved in the catabolism of galactitol. The sequence is that of D-tagatose-1,6-bisphosphate aldolase subunit GatZ from Klebsiella pneumoniae subsp. pneumoniae (strain ATCC 700721 / MGH 78578).